Reading from the N-terminus, the 440-residue chain is Serine hydroxymethyltransferase (440 aa).

Residues L119 and 123 to 125 (GHL) each bind (6S)-5,6,7,8-tetrahydrofolate. K228 carries the N6-(pyridoxal phosphate)lysine modification. Residue 370 to 372 (SPF) participates in (6S)-5,6,7,8-tetrahydrofolate binding.

This sequence belongs to the SHMT family. Homodimer. Pyridoxal 5'-phosphate is required as a cofactor.

It localises to the cytoplasm. It carries out the reaction (6R)-5,10-methylene-5,6,7,8-tetrahydrofolate + glycine + H2O = (6S)-5,6,7,8-tetrahydrofolate + L-serine. It participates in one-carbon metabolism; tetrahydrofolate interconversion. The protein operates within amino-acid biosynthesis; glycine biosynthesis; glycine from L-serine: step 1/1. Functionally, catalyzes the reversible interconversion of serine and glycine with tetrahydrofolate (THF) serving as the one-carbon carrier. This reaction serves as the major source of one-carbon groups required for the biosynthesis of purines, thymidylate, methionine, and other important biomolecules. Also exhibits THF-independent aldolase activity toward beta-hydroxyamino acids, producing glycine and aldehydes, via a retro-aldol mechanism. In Chloroherpeton thalassium (strain ATCC 35110 / GB-78), this protein is Serine hydroxymethyltransferase.